The following is a 418-amino-acid chain: ATP phosphoribosyltransferase regulatory subunit (418 aa).

This sequence belongs to the class-II aminoacyl-tRNA synthetase family. HisZ subfamily. As to quaternary structure, heteromultimer composed of HisG and HisZ subunits.

Its subcellular location is the cytoplasm. It functions in the pathway amino-acid biosynthesis; L-histidine biosynthesis; L-histidine from 5-phospho-alpha-D-ribose 1-diphosphate: step 1/9. Its function is as follows. Required for the first step of histidine biosynthesis. May allow the feedback regulation of ATP phosphoribosyltransferase activity by histidine. The protein is ATP phosphoribosyltransferase regulatory subunit of Acetivibrio thermocellus (strain ATCC 27405 / DSM 1237 / JCM 9322 / NBRC 103400 / NCIMB 10682 / NRRL B-4536 / VPI 7372) (Clostridium thermocellum).